Reading from the N-terminus, the 428-residue chain is Trigger factor (428 aa).

The 76-residue stretch at 165-240 (ADLIKLDAEG…VKEVKRMELP (76 aa)) folds into the PPIase FKBP-type domain.

The protein belongs to the FKBP-type PPIase family. Tig subfamily.

The protein resides in the cytoplasm. The catalysed reaction is [protein]-peptidylproline (omega=180) = [protein]-peptidylproline (omega=0). Functionally, involved in protein export. Acts as a chaperone by maintaining the newly synthesized protein in an open conformation. Functions as a peptidyl-prolyl cis-trans isomerase. This Prosthecochloris aestuarii (strain DSM 271 / SK 413) protein is Trigger factor.